The following is a 250-amino-acid chain: Urease accessory protein UreG 3 (250 aa).

Positions 1 to 24 are disordered; that stretch reads MPDNASAQQPGQPAQGPNEHYHQP. The segment covering 7–17 has biased composition (low complexity); the sequence is AQQPGQPAQGP. 37–44 contributes to the GTP binding site; sequence GPVGTGKS. The disordered stretch occupies residues 230–250; it reads GTHVPTDPGPMAPHSHSHDGS.

Belongs to the SIMIBI class G3E GTPase family. UreG subfamily. As to quaternary structure, homodimer. UreD, UreF and UreG form a complex that acts as a GTP-hydrolysis-dependent molecular chaperone, activating the urease apoprotein by helping to assemble the nickel containing metallocenter of UreC. The UreE protein probably delivers the nickel.

It is found in the cytoplasm. Its function is as follows. Facilitates the functional incorporation of the urease nickel metallocenter. This process requires GTP hydrolysis, probably effectuated by UreG. The protein is Urease accessory protein UreG 3 of Streptomyces griseus subsp. griseus (strain JCM 4626 / CBS 651.72 / NBRC 13350 / KCC S-0626 / ISP 5235).